Here is a 252-residue protein sequence, read N- to C-terminus: Ribosome assembly factor mrt4 (252 aa).

The protein belongs to the universal ribosomal protein uL10 family. Associates with the pre-60S ribosomal particle.

Its subcellular location is the nucleus. It localises to the nucleolus. The protein localises to the cytoplasm. Its function is as follows. Component of the ribosome assembly machinery. Nuclear paralog of the ribosomal protein P0, it binds pre-60S subunits at an early stage of assembly in the nucleolus, and is replaced by P0 in cytoplasmic pre-60S subunits and mature 80S ribosomes. The sequence is that of Ribosome assembly factor mrt4 from Neurospora crassa (strain ATCC 24698 / 74-OR23-1A / CBS 708.71 / DSM 1257 / FGSC 987).